A 450-amino-acid chain; its full sequence is Phosphoglucosamine mutase (450 aa).

Serine 101 serves as the catalytic Phosphoserine intermediate. Positions 101, 241, 243, and 245 each coordinate Mg(2+). Position 101 is a phosphoserine (serine 101).

Belongs to the phosphohexose mutase family. Mg(2+) is required as a cofactor. In terms of processing, activated by phosphorylation.

The enzyme catalyses alpha-D-glucosamine 1-phosphate = D-glucosamine 6-phosphate. Catalyzes the conversion of glucosamine-6-phosphate to glucosamine-1-phosphate. In Listeria monocytogenes serotype 4b (strain F2365), this protein is Phosphoglucosamine mutase.